The chain runs to 521 residues: Calcium-dependent protein kinase 33 (521 aa).

A lipid anchor (N-myristoyl glycine) is attached at glycine 2. Residues 15–56 are disordered; sequence PQQNGERSVEIENRRRSTHQDPSKISTGTNQPPPWRNPAKHS. The segment covering 21–36 has biased composition (basic and acidic residues); it reads RSVEIENRRRSTHQDP. The Protein kinase domain maps to 73-331; the sequence is YTLSKELGRG…AAEVLKHPWL (259 aa). Residues 79-87 and lysine 102 contribute to the ATP site; that span reads LGRGQFGVT. The Proton acceptor role is filled by aspartate 197. Serine 237 carries the post-translational modification Phosphoserine. Residues 337–367 are autoinhibitory domain; sequence ASDKPIDSAVLSRMKQFRAMNKLKKLALKVI. 4 EF-hand domains span residues 374-409, 410-445, 446-481, and 482-516; these read EEIQGLKAMFANIDTDNSGTITYEELKEGLAKLGSR, LTEAEVKQLMDAADVDGNGSIDYIEFITATMHRHRL, ESNENVYKAFQHFDKDGSGYITTDELEAALKEYGMG, and DDATIKEILSDVDADNDGRINYDEFCAMMRSGNPQ. Residues aspartate 387, aspartate 389, serine 391, threonine 393, glutamate 398, aspartate 423, aspartate 425, asparagine 427, serine 429, glutamate 434, aspartate 459, aspartate 461, serine 463, tyrosine 465, glutamate 470, aspartate 494, aspartate 496, aspartate 498, arginine 500, and glutamate 505 each contribute to the Ca(2+) site.

Belongs to the protein kinase superfamily. Ser/Thr protein kinase family. CDPK subfamily. In terms of assembly, interacts with THI1. Interacts with FD and FDP. Post-translationally, autophosphorylated. As to expression, expressed in primary roots, leaves, inflorescences, siliques and guard cells. Expressed in the shoot apical meristem.

It is found in the cell membrane. It localises to the nucleus. The protein localises to the cytoplasm. The enzyme catalyses L-seryl-[protein] + ATP = O-phospho-L-seryl-[protein] + ADP + H(+). It catalyses the reaction L-threonyl-[protein] + ATP = O-phospho-L-threonyl-[protein] + ADP + H(+). With respect to regulation, activated by calcium. Autophosphorylation may play an important role in the regulation of the kinase activity. Repressed by THI1 through a negative regulation of the autophosphorylation activity in the presence of Ca(2+). Ca(2+)-dependent protein kinase. Negative regulator of stomatal closure and slow anion currents. Unable to phosphorylate THI1 in vitro, but the kinase activity is essential for the stomatal closure regulation. Phosphorylates FD. May play a role in signal transduction pathways that involve calcium as a second messenger. In Arabidopsis thaliana (Mouse-ear cress), this protein is Calcium-dependent protein kinase 33.